We begin with the raw amino-acid sequence, 1401 residues long: DNA-directed RNA polymerase subunit beta (1401 aa).

This sequence belongs to the RNA polymerase beta chain family. The RNAP catalytic core consists of 2 alpha, 1 beta, 1 beta' and 1 omega subunit. When a sigma factor is associated with the core the holoenzyme is formed, which can initiate transcription.

The enzyme catalyses RNA(n) + a ribonucleoside 5'-triphosphate = RNA(n+1) + diphosphate. DNA-dependent RNA polymerase catalyzes the transcription of DNA into RNA using the four ribonucleoside triphosphates as substrates. The polypeptide is DNA-directed RNA polymerase subunit beta (Desulforapulum autotrophicum (strain ATCC 43914 / DSM 3382 / VKM B-1955 / HRM2) (Desulfobacterium autotrophicum)).